The chain runs to 200 residues: Recombination protein RecR (200 aa).

A C4-type zinc finger spans residues 57–72 (CSECRTFTEEDTCAIC). Positions 81 to 176 (GEMCIVESPA…PASRIAHGVP (96 aa)) constitute a Toprim domain.

The protein belongs to the RecR family.

In terms of biological role, may play a role in DNA repair. It seems to be involved in an RecBC-independent recombinational process of DNA repair. It may act with RecF and RecO. The protein is Recombination protein RecR of Aliivibrio fischeri (strain ATCC 700601 / ES114) (Vibrio fischeri).